Reading from the N-terminus, the 158-residue chain is Cyclic pyranopterin monophosphate synthase (158 aa).

Substrate contacts are provided by residues L73 to H75 and M110 to E111. D125 is a catalytic residue.

It belongs to the MoaC family. In terms of assembly, homohexamer; trimer of dimers.

The catalysed reaction is (8S)-3',8-cyclo-7,8-dihydroguanosine 5'-triphosphate = cyclic pyranopterin phosphate + diphosphate. The protein operates within cofactor biosynthesis; molybdopterin biosynthesis. Its function is as follows. Catalyzes the conversion of (8S)-3',8-cyclo-7,8-dihydroguanosine 5'-triphosphate to cyclic pyranopterin monophosphate (cPMP). The chain is Cyclic pyranopterin monophosphate synthase from Ectopseudomonas mendocina (strain ymp) (Pseudomonas mendocina).